The chain runs to 388 residues: Succinyl-diaminopimelate desuccinylase (388 aa).

Residue histidine 74 coordinates Zn(2+). Aspartate 76 is an active-site residue. Aspartate 107 provides a ligand contact to Zn(2+). Glutamate 142 functions as the Proton acceptor in the catalytic mechanism. Residues glutamate 143, glutamate 171, and histidine 360 each contribute to the Zn(2+) site.

It belongs to the peptidase M20A family. DapE subfamily. In terms of assembly, homodimer. Zn(2+) serves as cofactor. It depends on Co(2+) as a cofactor.

It carries out the reaction N-succinyl-(2S,6S)-2,6-diaminopimelate + H2O = (2S,6S)-2,6-diaminopimelate + succinate. The protein operates within amino-acid biosynthesis; L-lysine biosynthesis via DAP pathway; LL-2,6-diaminopimelate from (S)-tetrahydrodipicolinate (succinylase route): step 3/3. In terms of biological role, catalyzes the hydrolysis of N-succinyl-L,L-diaminopimelic acid (SDAP), forming succinate and LL-2,6-diaminopimelate (DAP), an intermediate involved in the bacterial biosynthesis of lysine and meso-diaminopimelic acid, an essential component of bacterial cell walls. The sequence is that of Succinyl-diaminopimelate desuccinylase from Rhodopseudomonas palustris (strain BisB5).